Here is a 38-residue protein sequence, read N- to C-terminus: MKVQASVKKICGSCKVVRRKGRVHVICTAEPRHKQRQG.

The protein belongs to the bacterial ribosomal protein bL36 family.

This Psychrobacter arcticus (strain DSM 17307 / VKM B-2377 / 273-4) protein is Large ribosomal subunit protein bL36.